A 549-amino-acid polypeptide reads, in one-letter code: Oxygen-dependent choline dehydrogenase (549 aa).

An FAD-binding site is contributed by 4-33 (DFVIIGSGSAGSALAYRLSEDGANSVVVLE). His-465 serves as the catalytic Proton acceptor.

This sequence belongs to the GMC oxidoreductase family. FAD serves as cofactor.

It carries out the reaction choline + A = betaine aldehyde + AH2. The catalysed reaction is betaine aldehyde + NAD(+) + H2O = glycine betaine + NADH + 2 H(+). It participates in amine and polyamine biosynthesis; betaine biosynthesis via choline pathway; betaine aldehyde from choline (cytochrome c reductase route): step 1/1. Its function is as follows. Involved in the biosynthesis of the osmoprotectant glycine betaine. Catalyzes the oxidation of choline to betaine aldehyde and betaine aldehyde to glycine betaine at the same rate. The protein is Oxygen-dependent choline dehydrogenase of Sinorhizobium medicae (strain WSM419) (Ensifer medicae).